The following is a 268-amino-acid chain: Exopolysaccharide production negative regulator (268 aa).

Residues 1–22 (MRAGELKSLRVAVLGMSLAVGA) form the signal peptide.

Functionally, negatively modulates exopolysaccharide (EPS) biosynthesis. The sequence is that of Exopolysaccharide production negative regulator (exoR) from Rhizobium meliloti (strain 1021) (Ensifer meliloti).